We begin with the raw amino-acid sequence, 393 residues long: Small ribosomal subunit protein bS1 (393 aa).

S1 motif domains lie at 16–90, 108–173, 194–262, and 279–348; these read GDKV…LSKR, NQTI…LSRK, and GDVI…LSIK. Polar residues predominate over residues 356–369; sequence VIESDSETTQSYLD. Positions 356–381 are disordered; the sequence is VIESDSETTQSYLDNGSDDEDNPTLG.

The protein belongs to the bacterial ribosomal protein bS1 family.

Binds mRNA; thus facilitating recognition of the initiation point. It is needed to translate mRNA with a short Shine-Dalgarno (SD) purine-rich sequence. This Staphylococcus saprophyticus subsp. saprophyticus (strain ATCC 15305 / DSM 20229 / NCIMB 8711 / NCTC 7292 / S-41) protein is Small ribosomal subunit protein bS1 (rpsA).